Consider the following 602-residue polypeptide: uncharacterized protein (602 aa).

In terms of domain architecture, Helicase ATP-binding spans 51–210 (QYLGTQPRDF…PFVSYQPDAD (160 aa)). Positions 430-439 (PHRESAHDPL) are enriched in basic and acidic residues. 2 disordered regions span residues 430 to 452 (PHRE…TERG) and 518 to 538 (RAQL…ASVH). Residues 523 to 534 (KGATQPATSGAS) are compositionally biased toward polar residues.

The protein to M.leprae ML1624.

This is an uncharacterized protein from Mycobacterium tuberculosis (strain ATCC 25618 / H37Rv).